The sequence spans 237 residues: Phosphoserine phosphatase (237 aa).

D30 functions as the Nucleophile in the catalytic mechanism. The Mg(2+) site is built by D30 and D32. The active-site Proton donor is the D32. Substrate contacts are provided by residues E39, R76, 120-121 (SG), and K169. Position 192 (D192) interacts with Mg(2+). N195 contributes to the substrate binding site.

This sequence belongs to the HAD-like hydrolase superfamily. SerB family. Mg(2+) serves as cofactor.

It catalyses the reaction O-phospho-L-serine + H2O = L-serine + phosphate. The enzyme catalyses O-phospho-D-serine + H2O = D-serine + phosphate. The protein operates within amino-acid biosynthesis; L-serine biosynthesis; L-serine from 3-phospho-D-glycerate: step 3/3. In terms of biological role, catalyzes the dephosphorylation of phosphoserine (P-Ser) in vitro. Also catalyzes the dephosphorylation of phosphothreonine (P-Thr) in vitro. This is Phosphoserine phosphatase from Albidiferax ferrireducens (strain ATCC BAA-621 / DSM 15236 / T118) (Rhodoferax ferrireducens).